The following is a 299-amino-acid chain: Putative peptidyl-prolyl cis-trans isomerase jhp_0161 (299 aa).

Positions 1–21 (MKKNILNLALVGALSASFLMA) are cleaved as a signal peptide. The 100-residue stretch at 154 to 253 (KQEAHARHIL…FGYHIIYLIS (100 aa)) folds into the PpiC domain.

It carries out the reaction [protein]-peptidylproline (omega=180) = [protein]-peptidylproline (omega=0). This chain is Putative peptidyl-prolyl cis-trans isomerase jhp_0161, found in Helicobacter pylori (strain J99 / ATCC 700824) (Campylobacter pylori J99).